Here is a 214-residue protein sequence, read N- to C-terminus: Large ribosomal subunit protein uL16 (214 aa).

Arg-32 bears the Citrulline mark. Lys-175 is covalently cross-linked (Glycyl lysine isopeptide (Lys-Gly) (interchain with G-Cter in SUMO2)). Lys-188 is covalently cross-linked (Glycyl lysine isopeptide (Lys-Gly) (interchain with G-Cter in ubiquitin)).

Belongs to the universal ribosomal protein uL16 family. As to quaternary structure, component of the large ribosomal subunit. Mature ribosomes consist of a small (40S) and a large (60S) subunit. The 40S subunit contains about 33 different proteins and 1 molecule of RNA (18S). The 60S subunit contains about 49 different proteins and 3 molecules of RNA (28S, 5.8S and 5S). In terms of processing, citrullinated by PADI4. Post-translationally, ufmylated by UFL1.

The protein resides in the cytoplasm. Component of the large ribosomal subunit. Plays a role in the formation of actively translating ribosomes. May play a role in the embryonic brain development. The protein is Large ribosomal subunit protein uL16 of Homo sapiens (Human).